The sequence spans 495 residues: Bile acid-sensitive ion channel (495 aa).

The interval 1–30 is binds the plasma membrane and stabilizes the channel in the closed state; it reads MEHTEKSKGPAEKGLLGKIRRYLSKRPLPS. Over 1 to 61 the chain is Cytoplasmic; that stretch reads MEHTEKSKGP…NIAQNQNKVR (61 aa). A helical membrane pass occupies residues 62–82; that stretch reads KVIWLSVVLGSVSLLVWQIYS. The Extracellular portion of the chain corresponds to 83-459; it reads RLVNYFMWPT…GLFCGASLIT (377 aa). 6 cysteine pairs are disulfide-bonded: C112/C207, C185/C192, C298/C377, C315/C373, C328/C350, and C330/C342. 2 N-linked (GlcNAc...) asparagine glycosylation sites follow: N147 and N163. An N-linked (GlcNAc...) asparagine glycan is attached at N306. Residues N370, N405, and N421 are each glycosylated (N-linked (GlcNAc...) asparagine). The GAS motif; ion selectivity filter signature appears at 454-456; sequence GAS. Residues 460–480 form a helical membrane-spanning segment; sequence IIEIIEYLFTSFYWVFIFFLL. Residues 481–495 lie on the Cytoplasmic side of the membrane; that stretch reads KILEMIQRTSPPQTV.

The protein belongs to the amiloride-sensitive sodium channel (TC 1.A.6) family. ASIC5 subfamily. As to quaternary structure, forms homotrimeric channels. As to expression, expressed by cholangiocytes (at protein level). Detected in brain, liver, duodenum, jejunum, ileum and testis.

The protein localises to the apical cell membrane. It localises to the cell membrane. It catalyses the reaction Na(+)(in) = Na(+)(out). It carries out the reaction Li(+)(in) = Li(+)(out). The enzyme catalyses K(+)(in) = K(+)(out). The catalysed reaction is H(+)(in) = H(+)(out). With respect to regulation, inhibited by the diuretic drug amiloride. Inhibited by diminazene. Inhibited by extracellular Ca(2+). Forms bile acid-gated sodium channels and may play a role in bile acid-dependent absorption and secretion by epithelial cells of the bile ducts. Displays high selectivity for sodium ions but can also permit the permeation of other cations. The gating could be indirect and the consequence of alterations of the membrane environment of the channel by bile acids. As a sodium channel of type II unipolar brush cells of the vestibulocerebellum, controlling the electrical activity of these cells, could play a role in motor coordination and balance. This chain is Bile acid-sensitive ion channel, found in Rattus norvegicus (Rat).